A 103-amino-acid chain; its full sequence is Histone H4 (103 aa).

A compositionally biased stretch (gly residues) spans 1 to 14; sequence MSGRGKGGKGLGKG. A disordered region spans residues 1–20; that stretch reads MSGRGKGGKGLGKGGAKRHR. At serine 2 the chain carries N-acetylserine. Lysine 17 carries the post-translational modification N6-acetyllysine. A DNA-binding region spans residues 17-21; the sequence is KRHRK. N6-methyllysine is present on lysine 21.

It belongs to the histone H4 family. The nucleosome is a histone octamer containing two molecules each of H2A, H2B, H3 and H4 assembled in one H3-H4 heterotetramer and two H2A-H2B heterodimers. The octamer wraps approximately 147 bp of DNA.

The protein localises to the nucleus. It localises to the chromosome. Core component of nucleosome. Nucleosomes wrap and compact DNA into chromatin, limiting DNA accessibility to the cellular machineries which require DNA as a template. Histones thereby play a central role in transcription regulation, DNA repair, DNA replication and chromosomal stability. DNA accessibility is regulated via a complex set of post-translational modifications of histones, also called histone code, and nucleosome remodeling. The sequence is that of Histone H4 from Capsicum annuum (Capsicum pepper).